The sequence spans 302 residues: Acetylglutamate kinase (302 aa).

Substrate is bound by residues 68–69 (GG), arginine 90, and asparagine 195.

The protein belongs to the acetylglutamate kinase family. ArgB subfamily.

The protein resides in the cytoplasm. The enzyme catalyses N-acetyl-L-glutamate + ATP = N-acetyl-L-glutamyl 5-phosphate + ADP. It participates in amino-acid biosynthesis; L-arginine biosynthesis; N(2)-acetyl-L-ornithine from L-glutamate: step 2/4. Functionally, catalyzes the ATP-dependent phosphorylation of N-acetyl-L-glutamate. This chain is Acetylglutamate kinase, found in Marinomonas sp. (strain MWYL1).